The chain runs to 251 residues: Hydroxyacylglutathione hydrolase (251 aa).

7 residues coordinate Zn(2+): His53, His55, Asp57, His58, His110, Asp127, and His165.

It belongs to the metallo-beta-lactamase superfamily. Glyoxalase II family. In terms of assembly, monomer. Zn(2+) is required as a cofactor.

It carries out the reaction an S-(2-hydroxyacyl)glutathione + H2O = a 2-hydroxy carboxylate + glutathione + H(+). The protein operates within secondary metabolite metabolism; methylglyoxal degradation; (R)-lactate from methylglyoxal: step 2/2. Functionally, thiolesterase that catalyzes the hydrolysis of S-D-lactoyl-glutathione to form glutathione and D-lactic acid. The sequence is that of Hydroxyacylglutathione hydrolase from Escherichia coli (strain UTI89 / UPEC).